The sequence spans 147 residues: Nucleoside diphosphate kinase (147 aa).

Residues lysine 9, phenylalanine 57, arginine 85, threonine 91, arginine 102, and asparagine 112 each contribute to the ATP site. Histidine 115 functions as the Pros-phosphohistidine intermediate in the catalytic mechanism.

This sequence belongs to the NDK family. Mg(2+) is required as a cofactor.

The protein resides in the cytoplasm. The catalysed reaction is a 2'-deoxyribonucleoside 5'-diphosphate + ATP = a 2'-deoxyribonucleoside 5'-triphosphate + ADP. It carries out the reaction a ribonucleoside 5'-diphosphate + ATP = a ribonucleoside 5'-triphosphate + ADP. Functionally, major role in the synthesis of nucleoside triphosphates other than ATP. The ATP gamma phosphate is transferred to the NDP beta phosphate via a ping-pong mechanism, using a phosphorylated active-site intermediate. The protein is Nucleoside diphosphate kinase of Thermoplasma volcanium (strain ATCC 51530 / DSM 4299 / JCM 9571 / NBRC 15438 / GSS1).